A 164-amino-acid chain; its full sequence is uncharacterized protein (164 aa).

The HTH marR-type domain maps to 28-157; sequence EAEILYQLQG…LIDVLARMRN (130 aa). Positions 71-94 form a DNA-binding region, H-T-H motif; it reads QSDLQKKVNIDSAAVTRHLKQLES.

This is an uncharacterized protein from Bacillus subtilis (strain 168).